We begin with the raw amino-acid sequence, 451 residues long: Methylenetetrahydrofolate--tRNA-(uracil-5-)-methyltransferase TrmFO (451 aa).

Residue 9 to 14 participates in FAD binding; the sequence is GGGMAG.

It belongs to the MnmG family. TrmFO subfamily. Requires FAD as cofactor.

It localises to the cytoplasm. It catalyses the reaction uridine(54) in tRNA + (6R)-5,10-methylene-5,6,7,8-tetrahydrofolate + NADH + H(+) = 5-methyluridine(54) in tRNA + (6S)-5,6,7,8-tetrahydrofolate + NAD(+). The catalysed reaction is uridine(54) in tRNA + (6R)-5,10-methylene-5,6,7,8-tetrahydrofolate + NADPH + H(+) = 5-methyluridine(54) in tRNA + (6S)-5,6,7,8-tetrahydrofolate + NADP(+). Functionally, catalyzes the folate-dependent formation of 5-methyl-uridine at position 54 (M-5-U54) in all tRNAs. This Dinoroseobacter shibae (strain DSM 16493 / NCIMB 14021 / DFL 12) protein is Methylenetetrahydrofolate--tRNA-(uracil-5-)-methyltransferase TrmFO.